The chain runs to 406 residues: Phosphopentomutase (406 aa).

Mn(2+) is bound by residues D10, D305, H310, D346, H347, and H358.

Belongs to the phosphopentomutase family. The cofactor is Mn(2+).

Its subcellular location is the cytoplasm. It catalyses the reaction 2-deoxy-alpha-D-ribose 1-phosphate = 2-deoxy-D-ribose 5-phosphate. The enzyme catalyses alpha-D-ribose 1-phosphate = D-ribose 5-phosphate. It participates in carbohydrate degradation; 2-deoxy-D-ribose 1-phosphate degradation; D-glyceraldehyde 3-phosphate and acetaldehyde from 2-deoxy-alpha-D-ribose 1-phosphate: step 1/2. Its function is as follows. Isomerase that catalyzes the conversion of deoxy-ribose 1-phosphate (dRib-1-P) and ribose 1-phosphate (Rib-1-P) to deoxy-ribose 5-phosphate (dRib-5-P) and ribose 5-phosphate (Rib-5-P), respectively. This is Phosphopentomutase from Rhizobium leguminosarum bv. trifolii (strain WSM2304).